Reading from the N-terminus, the 232-residue chain is Phosphatidylserine decarboxylase proenzyme (232 aa).

The Schiff-base intermediate with substrate; via pyruvic acid role is filled by S190. Pyruvic acid (Ser); by autocatalysis is present on S190.

The protein belongs to the phosphatidylserine decarboxylase family. PSD-A subfamily. In terms of assembly, heterodimer of a large membrane-associated beta subunit and a small pyruvoyl-containing alpha subunit. The cofactor is pyruvate. In terms of processing, is synthesized initially as an inactive proenzyme. Formation of the active enzyme involves a self-maturation process in which the active site pyruvoyl group is generated from an internal serine residue via an autocatalytic post-translational modification. Two non-identical subunits are generated from the proenzyme in this reaction, and the pyruvate is formed at the N-terminus of the alpha chain, which is derived from the carboxyl end of the proenzyme. The post-translation cleavage follows an unusual pathway, termed non-hydrolytic serinolysis, in which the side chain hydroxyl group of the serine supplies its oxygen atom to form the C-terminus of the beta chain, while the remainder of the serine residue undergoes an oxidative deamination to produce ammonia and the pyruvoyl prosthetic group on the alpha chain.

The protein localises to the cell membrane. The catalysed reaction is a 1,2-diacyl-sn-glycero-3-phospho-L-serine + H(+) = a 1,2-diacyl-sn-glycero-3-phosphoethanolamine + CO2. The protein operates within phospholipid metabolism; phosphatidylethanolamine biosynthesis; phosphatidylethanolamine from CDP-diacylglycerol: step 2/2. Its function is as follows. Catalyzes the formation of phosphatidylethanolamine (PtdEtn) from phosphatidylserine (PtdSer). In Methylocella silvestris (strain DSM 15510 / CIP 108128 / LMG 27833 / NCIMB 13906 / BL2), this protein is Phosphatidylserine decarboxylase proenzyme.